Here is a 409-residue protein sequence, read N- to C-terminus: Nucleoprotein (409 aa).

Disordered stretches follow at residues M1–R84 and A121–D194. Low complexity predominate over residues P15–G31. The tract at residues S29–L160 is RNA-binding. One can recognise a CoV N NTD domain in the interval G31–D156. Positions Y70–R84 are enriched in basic residues. The segment covering R162–A179 has biased composition (low complexity). A compositionally biased stretch (basic and acidic residues) spans P180 to S192. S190 and S192 each carry phosphoserine; by host. In terms of domain architecture, CoV N CTD spans T215–P331. The segment at R226 to D333 is dimerization. 2 disulfide bridges follow: C281–C308 and C320–C323. Residues V327–V396 form a disordered region. Over residues Q358–K367 the composition is skewed to basic residues. Basic and acidic residues predominate over residues K368 to N384. Phosphothreonine; by host is present on T378. S379 is subject to Phosphoserine; by host.

Belongs to the gammacoronavirus nucleocapsid protein family. Homooligomer. Both monomeric and oligomeric forms interact with RNA. Interacts with protein M. Interacts with NSP3; this interaction serves to tether the genome to the newly translated replicase-transcriptase complex at a very early stage of infection. In terms of processing, ADP-ribosylated. The ADP-ribosylation is retained in the virion during infection. Post-translationally, phosphorylated on serine and threonine residues.

The protein resides in the virion. It localises to the host endoplasmic reticulum-Golgi intermediate compartment. It is found in the host Golgi apparatus. Functionally, packages the positive strand viral genome RNA into a helical ribonucleocapsid (RNP) and plays a fundamental role during virion assembly through its interactions with the viral genome and membrane protein M. Plays an important role in enhancing the efficiency of subgenomic viral RNA transcription as well as viral replication. The chain is Nucleoprotein from Gallus gallus (Chicken).